Reading from the N-terminus, the 107-residue chain is Nucleoid-associated protein Rru_A3472 (107 aa).

Belongs to the YbaB/EbfC family. Homodimer.

Its subcellular location is the cytoplasm. The protein resides in the nucleoid. Its function is as follows. Binds to DNA and alters its conformation. May be involved in regulation of gene expression, nucleoid organization and DNA protection. The protein is Nucleoid-associated protein Rru_A3472 of Rhodospirillum rubrum (strain ATCC 11170 / ATH 1.1.1 / DSM 467 / LMG 4362 / NCIMB 8255 / S1).